A 267-amino-acid polypeptide reads, in one-letter code: Undecaprenyl-diphosphatase (267 aa).

The next 7 helical transmembrane spans lie at M1 to V21, V49 to G69, A83 to L103, A111 to W131, M190 to A210, D219 to M239, and V245 to A265.

This sequence belongs to the UppP family.

It is found in the cell inner membrane. It carries out the reaction di-trans,octa-cis-undecaprenyl diphosphate + H2O = di-trans,octa-cis-undecaprenyl phosphate + phosphate + H(+). Catalyzes the dephosphorylation of undecaprenyl diphosphate (UPP). Confers resistance to bacitracin. This Dinoroseobacter shibae (strain DSM 16493 / NCIMB 14021 / DFL 12) protein is Undecaprenyl-diphosphatase.